Reading from the N-terminus, the 96-residue chain is Co-chaperonin GroES (96 aa).

This sequence belongs to the GroES chaperonin family. Heptamer of 7 subunits arranged in a ring. Interacts with the chaperonin GroEL.

It localises to the cytoplasm. Its function is as follows. Together with the chaperonin GroEL, plays an essential role in assisting protein folding. The GroEL-GroES system forms a nano-cage that allows encapsulation of the non-native substrate proteins and provides a physical environment optimized to promote and accelerate protein folding. GroES binds to the apical surface of the GroEL ring, thereby capping the opening of the GroEL channel. This chain is Co-chaperonin GroES, found in Geotalea daltonii (strain DSM 22248 / JCM 15807 / FRC-32) (Geobacter daltonii).